A 208-amino-acid polypeptide reads, in one-letter code: Adenylate kinase (208 aa).

An ATP-binding site is contributed by 10-15 (GAGKGT). Residues 30–59 (STGEMLRAAVAAGTPVGLKAKDVMASGGLV) are NMP. AMP is bound by residues T31, R36, 57 to 59 (GLV), 85 to 88 (GFPR), and Q92. The segment at 126–142 (SRVAEMTARGEQVRADD) is LID. R127 is a binding site for ATP. R139 and R150 together coordinate AMP. M178 contacts ATP.

Belongs to the adenylate kinase family. As to quaternary structure, monomer.

It is found in the cytoplasm. It catalyses the reaction AMP + ATP = 2 ADP. The protein operates within purine metabolism; AMP biosynthesis via salvage pathway; AMP from ADP: step 1/1. Functionally, catalyzes the reversible transfer of the terminal phosphate group between ATP and AMP. Plays an important role in cellular energy homeostasis and in adenine nucleotide metabolism. The protein is Adenylate kinase of Nitrobacter hamburgensis (strain DSM 10229 / NCIMB 13809 / X14).